The chain runs to 187 residues: Elongation factor P 1 (187 aa).

It belongs to the elongation factor P family.

Its subcellular location is the cytoplasm. The protein operates within protein biosynthesis; polypeptide chain elongation. Involved in peptide bond synthesis. Stimulates efficient translation and peptide-bond synthesis on native or reconstituted 70S ribosomes in vitro. Probably functions indirectly by altering the affinity of the ribosome for aminoacyl-tRNA, thus increasing their reactivity as acceptors for peptidyl transferase. The chain is Elongation factor P 1 from Geobacter sulfurreducens (strain ATCC 51573 / DSM 12127 / PCA).